Reading from the N-terminus, the 763-residue chain is Phosphoglycerol transferase I (763 aa).

4 helical membrane passes run 1-21, 26-46, 77-97, and 108-128; these read MSEL…AWKA, WWFA…ITLF, ILPG…LGWI, and FGYS…SPAF.

Belongs to the OpgB family.

It is found in the cell inner membrane. It catalyses the reaction a phosphatidylglycerol + a membrane-derived-oligosaccharide D-glucose = a 1,2-diacyl-sn-glycerol + a membrane-derived-oligosaccharide 6-(glycerophospho)-D-glucose.. Its pathway is glycan metabolism; osmoregulated periplasmic glucan (OPG) biosynthesis. Transfers a phosphoglycerol residue from phosphatidylglycerol to the membrane-bound nascent glucan backbones. This Shigella boydii serotype 18 (strain CDC 3083-94 / BS512) protein is Phosphoglycerol transferase I.